Consider the following 632-residue polypeptide: Basic helix-loop-helix ARNT-like protein 1 (632 aa).

The tract at residues 1–39 is disordered; the sequence is MADQRMDISSTISDFMSPGPTDLLSGSLGTSGVDCNRKR. At S17 the chain carries Phosphoserine; by GSK3-beta. Phosphothreonine; by GSK3-beta is present on T21. The Nuclear localization signal signature appears at 36-41; that stretch reads NRKRKG. The 54-residue stretch at 79-132 folds into the bHLH domain; it reads NAREAHSQIEKRRRDKMNSFIDELASLVPTCNAMSRKLDKLTVLRMAVQHMKTL. Position 85 is a phosphoserine (S85). Position 97 is a phosphoserine; by CK2 (S97). The short motif at 149–159 is the Nuclear export signal 1 element; the sequence is LSDDELKHLIL. One can recognise a PAS 1 domain in the interval 150–222; it reads SDDELKHLIL…EQLSSSDTAP (73 aa). K259 is covalently cross-linked (Glycyl lysine isopeptide (Lys-Gly) (interchain with G-Cter in SUMO2 and SUMO3)). K266 is covalently cross-linked (Glycyl lysine isopeptide (Lys-Gly) (interchain with G-Cter in SUMO); alternate). Residue K266 forms a Glycyl lysine isopeptide (Lys-Gly) (interchain with G-Cter in SUMO2); alternate linkage. The PAS 2 domain occupies 333-403; the sequence is QPANGEIRVK…CHRQVLQTRE (71 aa). A Nuclear export signal 2 motif is present at residues 367–375; it reads LAYLPQELL. The PAC domain maps to 408–451; the sequence is NCYKFKIKDGSFITLRSRWFSFMNPWTKEVEYIVSTNTVVLANV. Disordered stretches follow at residues 465–498 and 517–601; these read PPHS…RAGA and GSSP…SPSN. An interaction with CIART region spans residues 514 to 594; the sequence is RIRGSSPSSC…IGIDMIDNDQ (81 aa). A compositionally biased stretch (low complexity) spans 517–527; that stretch reads GSSPSSCGSSP. K544 bears the N6-acetyllysine mark.

As to quaternary structure, component of the circadian clock oscillator which includes the CRY1/2 proteins, CLOCK or NPAS2, BMAL1 or BMAL2, CSNK1D and/or CSNK1E, TIMELESS and the PER1/2/3 proteins. Forms a heterodimer with CLOCK. The CLOCK-BMAL1 heterodimer is required for E-box-dependent transactivation, for CLOCK nuclear translocation and degradation, and, for phosphorylation of both CLOCK and BMAL1. Part of a nuclear complex which also includes RACK1 and PRKCA; RACK1 and PRKCA are recruited to the complex in a circadian manner. Interacts with NPAS2. Interacts with EZH2. Interacts with SUMO3. Interacts with SIRT1. Interacts with AHR. Interacts with ID1, ID2 and ID3. Interacts with DDX4. Interacts with OGT. Interacts with EED and SUZ12. Interacts with MTA1. Interacts with CIART. Interacts with HSP90. Interacts with KAT2B and EP300. Interacts with BHLHE40/DEC1 and BHLHE41/DEC2. Interacts with RELB and the interaction is enhanced in the presence of CLOCK. Interacts with PER1, PER2, CRY1 and CRY2 and this interaction requires a translocation to the nucleus. Interaction of the CLOCK-BMAL1 heterodimer with PER or CRY inhibits transcription activation. Interaction of the CLOCK-BMAL1 with CRY1 is independent of DNA but with PER2 is off DNA. The CLOCK-BMAL1 heterodimer interacts with GSK3B. Interacts with KDM5A. Interacts with KMT2A; in a circadian manner. Interacts with UBE3A. Interacts with PRKCG. Interacts with MAGEL2. Interacts with NCOA2. Interacts with THRAP3. The CLOCK-BMAL1 heterodimer interacts with PASD1. Interacts with PASD1. Interacts with USP9X. Interacts with PIWIL2 (via PIWI domain). Interacts with HDAC3. Interacts with HNF4A. In terms of processing, ubiquitinated, leading to its proteasomal degradation. Deubiquitinated by USP9X. Post-translationally, O-glycosylated; contains O-GlcNAc. O-glycosylation by OGT prevents protein degradation by inhibiting ubiquitination. It also stabilizes the CLOCK-BMAL1 heterodimer thereby increasing CLOCK-BMAL1-mediated transcription of genes in the negative loop of the circadian clock such as PER1/2/3 and CRY1/2. Acetylated on Lys-544 by CLOCK during the repression phase of the circadian cycle. Acetylation facilitates recruitment of CRY1 protein and initiates the repression phase of the circadian cycle. Acetylated at Lys-544 by KAT5 during the activation phase of the cycle, leading to recruitment of the positive transcription elongation factor b (P-TEFb) and BRD4, followed by productive elongation of circadian transcripts. Deacetylated by SIRT1, which may result in decreased protein stability. In terms of processing, phosphorylated upon dimerization with CLOCK. Phosphorylation enhances the transcriptional activity, alters the subcellular localization and decreases the stability of the CLOCK-BMAL1 heterodimer by promoting its degradation. Phosphorylation shows circadian variations in the liver with a peak between CT10 to CT14. Phosphorylation at Ser-97 by CK2 is essential for its nuclear localization, its interaction with CLOCK and controls CLOCK nuclear entry. Dephosphorylation at Ser-85 is important for dimerization with CLOCK and transcriptional activity. Post-translationally, sumoylated on Lys-266 upon dimerization with CLOCK. Predominantly conjugated to poly-SUMO2/3 rather than SUMO1 and the level of these conjugates undergo rhythmic variation, peaking at CT9-CT12. Sumoylation localizes it exclusively to the PML body and promotes its ubiquitination in the PML body, ubiquitin-dependent proteasomal degradation and the transcriptional activity of the CLOCK-BMAL1 heterodimer. Undergoes lysosome-mediated degradation in a time-dependent manner in the liver. As to expression, expressed in liver and testis (at protein level). Expressed in the suprachiasmatic nucleus (SCN) in a circadian manner.

It localises to the nucleus. It is found in the cytoplasm. The protein localises to the PML body. The redox state of the cell can modulate the transcriptional activity of the CLOCK-BMAL1 and NPAS2-BMAL1 heterodimers; NADH and NADPH enhance the DNA-binding activity of the heterodimers. In terms of biological role, transcriptional activator which forms a core component of the circadian clock. The circadian clock, an internal time-keeping system, regulates various physiological processes through the generation of approximately 24 hour circadian rhythms in gene expression, which are translated into rhythms in metabolism and behavior. It is derived from the Latin roots 'circa' (about) and 'diem' (day) and acts as an important regulator of a wide array of physiological functions including metabolism, sleep, body temperature, blood pressure, endocrine, immune, cardiovascular, and renal function. Consists of two major components: the central clock, residing in the suprachiasmatic nucleus (SCN) of the brain, and the peripheral clocks that are present in nearly every tissue and organ system. Both the central and peripheral clocks can be reset by environmental cues, also known as Zeitgebers (German for 'timegivers'). The predominant Zeitgeber for the central clock is light, which is sensed by retina and signals directly to the SCN. The central clock entrains the peripheral clocks through neuronal and hormonal signals, body temperature and feeding-related cues, aligning all clocks with the external light/dark cycle. Circadian rhythms allow an organism to achieve temporal homeostasis with its environment at the molecular level by regulating gene expression to create a peak of protein expression once every 24 hours to control when a particular physiological process is most active with respect to the solar day. Transcription and translation of core clock components (CLOCK, NPAS2, BMAL1, BMAL2, PER1, PER2, PER3, CRY1 and CRY2) plays a critical role in rhythm generation, whereas delays imposed by post-translational modifications (PTMs) are important for determining the period (tau) of the rhythms (tau refers to the period of a rhythm and is the length, in time, of one complete cycle). A diurnal rhythm is synchronized with the day/night cycle, while the ultradian and infradian rhythms have a period shorter and longer than 24 hours, respectively. Disruptions in the circadian rhythms contribute to the pathology of cardiovascular diseases, cancer, metabolic syndromes and aging. A transcription/translation feedback loop (TTFL) forms the core of the molecular circadian clock mechanism. Transcription factors, CLOCK or NPAS2 and BMAL1 or BMAL2, form the positive limb of the feedback loop, act in the form of a heterodimer and activate the transcription of core clock genes and clock-controlled genes (involved in key metabolic processes), harboring E-box elements (5'-CACGTG-3') within their promoters. The core clock genes: PER1/2/3 and CRY1/2 which are transcriptional repressors form the negative limb of the feedback loop and interact with the CLOCK|NPAS2-BMAL1|BMAL2 heterodimer inhibiting its activity and thereby negatively regulating their own expression. This heterodimer also activates nuclear receptors NR1D1/2 and RORA/B/G, which form a second feedback loop and which activate and repress BMAL1 transcription, respectively. BMAL1 positively regulates myogenesis and negatively regulates adipogenesis via the transcriptional control of the genes of the canonical Wnt signaling pathway. Plays a role in normal pancreatic beta-cell function; regulates glucose-stimulated insulin secretion via the regulation of antioxidant genes NFE2L2/NRF2 and its targets SESN2, PRDX3, CCLC and CCLM. Negatively regulates the mTORC1 signaling pathway; regulates the expression of MTOR and DEPTOR. Controls diurnal oscillations of Ly6C inflammatory monocytes; rhythmic recruitment of the PRC2 complex imparts diurnal variation to chemokine expression that is necessary to sustain Ly6C monocyte rhythms. Regulates the expression of HSD3B2, STAR, PTGS2, CYP11A1, CYP19A1 and LHCGR in the ovary and also the genes involved in hair growth. Plays an important role in adult hippocampal neurogenesis by regulating the timely entry of neural stem/progenitor cells (NSPCs) into the cell cycle and the number of cell divisions that take place prior to cell-cycle exit. Regulates the circadian expression of CIART and KLF11. The CLOCK-BMAL1 heterodimer regulates the circadian expression of SERPINE1/PAI1, VWF, B3, CCRN4L/NOC, NAMPT, DBP, MYOD1, PPARGC1A, PPARGC1B, SIRT1, GYS2, F7, NGFR, GNRHR, BHLHE40/DEC1, ATF4, MTA1, KLF10 and also genes implicated in glucose and lipid metabolism. Promotes rhythmic chromatin opening, regulating the DNA accessibility of other transcription factors. May play a role in spermatogenesis; contributes to the chromatoid body assembly and physiology. The NPAS2-BMAL1 heterodimer positively regulates the expression of MAOA, F7 and LDHA and modulates the circadian rhythm of daytime contrast sensitivity by regulating the rhythmic expression of adenylate cyclase type 1 (ADCY1) in the retina. The preferred binding motif for the CLOCK-BMAL1 heterodimer is 5'-CACGTGA-3', which contains a flanking adenine nucleotide at the 3-prime end of the canonical 6-nucleotide E-box sequence. CLOCK specifically binds to the half-site 5'-CAC-3', while BMAL1 binds to the half-site 5'-GTGA-3'. The CLOCK-BMAL1 heterodimer also recognizes the non-canonical E-box motifs 5'-AACGTGA-3' and 5'-CATGTGA-3'. Essential for the rhythmic interaction of CLOCK with ASS1 and plays a critical role in positively regulating CLOCK-mediated acetylation of ASS1. Plays a role in protecting against lethal sepsis by limiting the expression of immune checkpoint protein CD274 in macrophages in a PKM2-dependent manner. Regulates the diurnal rhythms of skeletal muscle metabolism via transcriptional activation of genes promoting triglyceride synthesis (DGAT2) and metabolic efficiency (COQ10B). In Mus musculus (Mouse), this protein is Basic helix-loop-helix ARNT-like protein 1 (Bmal1).